The sequence spans 404 residues: Putative gustatory receptor 94a (404 aa).

Residues 1–11 are Cytoplasmic-facing; the sequence is MDFTSDYAHRR. Residues 12 to 32 traverse the membrane as a helical segment; the sequence is MVKFLTIILIGFMTVFGLLAN. Residues 33 to 43 lie on the Extracellular side of the membrane; that stretch reads RYRAGRRERFR. Residues 44 to 64 traverse the membrane as a helical segment; the sequence is FSKANLAFASLWAIAFSLVYG. The Cytoplasmic segment spans residues 65–133; sequence RQIYKEYQEG…RLDSRSLYIS (69 aa). A helical transmembrane segment spans residues 134–154; that stretch reads IVLALVKTVAFPLTIEVAFIL. Topologically, residues 155-171 are extracellular; the sequence is QQRRQHPEMSLIWTLYR. A helical membrane pass occupies residues 172–192; the sequence is LFPLIISNFLNNCYFGAMVVV. Residues 193-260 lie on the Cytoplasmic side of the membrane; that stretch reads KEILYALNRR…HSGKYLTPMS (68 aa). Residues 261-281 traverse the membrane as a helical segment; sequence LSMILSLICHLLGITVGFYSL. The Extracellular segment spans residues 282–296; it reads YYAIADTLIMGKPYD. Residues 297–317 form a helical membrane-spanning segment; it reads GLGSLINLVFLSISLAEITLL. Over 318 to 376 the chain is Cytoplasmic; the sequence is THLCNHLLVATRRSAVILQEMNLQHADSRYRQAVHGFTLLVTVTKYQIKPLGLYELDMR. Residues 377–397 form a helical membrane-spanning segment; sequence LISNVFSAVASFLLILVQADL. The Extracellular portion of the chain corresponds to 398 to 404; that stretch reads SQRFKMQ.

The protein belongs to the insect chemoreceptor superfamily. Gustatory receptor (GR) family. Gr22e subfamily. In terms of tissue distribution, in larvae, is expressed in neurons of the terminal external chemosensory organ.

The protein resides in the cell membrane. Its function is as follows. Probable gustatory receptor which mediates acceptance or avoidance behavior, depending on its substrates. The chain is Putative gustatory receptor 94a (Gr94a) from Drosophila melanogaster (Fruit fly).